The chain runs to 389 residues: Transcription factor TGAL10 (389 aa).

Residues 80-110 (DDQDNAAALQESPRHASDSFEQEASKPRDKI) are disordered. A compositionally biased stretch (basic and acidic residues) spans 91-110 (SPRHASDSFEQEASKPRDKI). Positions 107-151 (RDKIQRRLAQNREAARKSRLRKKAYIQNLETSRMKLAHLEQEITR) constitute a bZIP domain. A basic motif region spans residues 109-129 (KIQRRLAQNREAARKSRLRKK). Residues 135 to 149 (LETSRMKLAHLEQEI) are leucine-zipper. Residues 176–389 (VVTFEVEYAQ…LHVRRRAELG (214 aa)) enclose the DOG1 domain. Disordered regions lie at residues 320 to 345 (TSCD…GDGG) and 370 to 389 (HRRS…AELG). The segment covering 380-389 (LHVRRRAELG) has biased composition (basic residues).

This sequence belongs to the bZIP family.

The protein localises to the nucleus. Transcriptional regulator involved in defense response. The protein is Transcription factor TGAL10 of Oryza sativa subsp. japonica (Rice).